A 65-amino-acid polypeptide reads, in one-letter code: Large ribosomal subunit protein bL33m (65 aa).

A mitochondrion-targeting transit peptide spans 1-8 (MFLSAVTF).

It belongs to the bacterial ribosomal protein bL33 family. In terms of assembly, component of the mitochondrial ribosome large subunit (39S) which comprises a 16S rRNA and about 50 distinct proteins.

It is found in the mitochondrion. This Bos taurus (Bovine) protein is Large ribosomal subunit protein bL33m (MRPL33).